The following is a 243-amino-acid chain: Uroporphyrinogen-III C-methyltransferase (243 aa).

S-adenosyl-L-homocysteine is bound by residues proline 12, 88–90, 118–119, methionine 166, and alanine 195; these read SGD and ST.

This sequence belongs to the precorrin methyltransferase family.

The enzyme catalyses uroporphyrinogen III + 2 S-adenosyl-L-methionine = precorrin-2 + 2 S-adenosyl-L-homocysteine + H(+). Its pathway is cofactor biosynthesis; adenosylcobalamin biosynthesis; precorrin-2 from uroporphyrinogen III: step 1/1. The protein operates within porphyrin-containing compound metabolism; siroheme biosynthesis; precorrin-2 from uroporphyrinogen III: step 1/1. Its function is as follows. Catalyzes the two successive C-2 and C-7 methylation reactions involved in the conversion of uroporphyrinogen III to precorrin-2 via the intermediate formation of precorrin-1. It is a step in the biosynthesis of both cobalamin (vitamin B12) and siroheme. In Synechococcus elongatus (strain ATCC 33912 / PCC 7942 / FACHB-805) (Anacystis nidulans R2), this protein is Uroporphyrinogen-III C-methyltransferase.